The chain runs to 353 residues: MSGNTLGTLFCVTNFGESHGPAIGCVVDGCPPGLPLEAADIQAELDRRRPGTSRHVTQRQEADQVEILSGVYEGVTTGTPIGLLIRNTDARSKDYSNIADTFRPGHADFAYWRKYGVRDPRGGGRSSARLTAPTVAAGAIAKKWLAGQFGVRVRGYMSQLGPIAIPFSSWDDVPGNAFYAPNAAVVPELEAYMDQLRRDGDSVGARIEVVAEGLPAGWGEPIYDRLDADIAHAMMGLNAVKGVSLGAGFESIAQRGSEHGDEITPEGFASNHAGGVLGGISTGQPITVSLAIKPTSSIRVERRSVNRAGEPVMVQTLGRHDPCVGIRATPIAEALLALVLIDHALRQRAQCGG.

NADP(+) is bound by residues R48 and R54. FMN-binding positions include 125–127 (RSS), 238–239 (NA), G278, 293–297 (KPTSS), and R319.

This sequence belongs to the chorismate synthase family. In terms of assembly, homotetramer. It depends on FMNH2 as a cofactor.

The enzyme catalyses 5-O-(1-carboxyvinyl)-3-phosphoshikimate = chorismate + phosphate. Its pathway is metabolic intermediate biosynthesis; chorismate biosynthesis; chorismate from D-erythrose 4-phosphate and phosphoenolpyruvate: step 7/7. Functionally, catalyzes the anti-1,4-elimination of the C-3 phosphate and the C-6 proR hydrogen from 5-enolpyruvylshikimate-3-phosphate (EPSP) to yield chorismate, which is the branch point compound that serves as the starting substrate for the three terminal pathways of aromatic amino acid biosynthesis. This reaction introduces a second double bond into the aromatic ring system. The sequence is that of Chorismate synthase from Bordetella bronchiseptica (strain ATCC BAA-588 / NCTC 13252 / RB50) (Alcaligenes bronchisepticus).